The chain runs to 565 residues: Wee1-like protein kinase 2 (565 aa).

Basic and acidic residues-rich tracts occupy residues 1-12 (MGDNGDNKELKQ) and 26-52 (EGQK…DSEA). Disordered stretches follow at residues 1–142 (MGDN…TPGP) and 169–189 (KSNG…EEGK). Residue S77 is modified to Phosphoserine. The Nuclear localization signal signature appears at 173 to 175 (KRK). Over residues 178–189 (RDLEEAGPEEGK) the composition is skewed to basic and acidic residues. One can recognise a Protein kinase domain in the interval 214-492 (FLEVEKIGVG…TRSRVLCPSL (279 aa)). ATP-binding positions include 220-228 (IGVGEFGTV) and K243. The short motif at 317 to 331 (KLKDILLQISLGLKY) is the Nuclear export signal element. The active-site Proton acceptor is the D341. Mg(2+) contacts are provided by N346 and D382. A coiled-coil region spans residues 495 to 521 (TEELQQQLNLEKFKTATLERELKEVQR). Residues 518–565 (EVQRAQSSKEGQSSPGVTGTHTGSRSTRRLVGGKSAKSSSFTWGQSSP) form a disordered region. 2 stretches are compositionally biased toward polar residues: residues 521–534 (RAQS…SPGV) and 553–565 (AKSS…QSSP).

It belongs to the protein kinase superfamily. Ser/Thr protein kinase family. WEE1 subfamily. Phosphorylation leads to increase its activity. In terms of tissue distribution, ovary-specific.

Its subcellular location is the nucleus. It carries out the reaction L-tyrosyl-[protein] + ATP = O-phospho-L-tyrosyl-[protein] + ADP + H(+). Oocyte-specific protein tyrosine kinase that phosphorylates and inhibits CDK1 and acts as a key regulator of meiosis during both prophase I and metaphase II. Required to maintain meiotic arrest in oocytes during the germinal vesicle (GV) stage, a long period of quiescence at dictyate prophase I, by phosphorylating CDK1 at 'Tyr-15', leading to inhibit CDK1 activity and prevent meiotic reentry. Also required for metaphase II exit during egg activation by phosphorylating CDK1 at 'Tyr-15', to ensure exit from meiosis in oocytes and promote pronuclear formation. The chain is Wee1-like protein kinase 2 (WEE2) from Sus scrofa (Pig).